We begin with the raw amino-acid sequence, 331 residues long: Putative heme-binding peroxidase (331 aa).

The active-site Proton acceptor is the histidine 50. Histidine 174 lines the heme b pocket. Tryptophan 190 (tryptophan radical intermediate) is an active-site residue. Residues 288-331 (INTDNQKGGYRSAPKKSDSTPATSGQPGASKTGGCPVMHHKAKL) form a disordered region. Residues 306–316 (STPATSGQPGA) are compositionally biased toward polar residues.

The protein belongs to the peroxidase family. Cytochrome c peroxidase subfamily. Requires heme b as cofactor.

In terms of biological role, destroys radicals which are normally produced within the cells and which are toxic to biological systems. This is Putative heme-binding peroxidase from Gibberella zeae (strain ATCC MYA-4620 / CBS 123657 / FGSC 9075 / NRRL 31084 / PH-1) (Wheat head blight fungus).